Here is a 255-residue protein sequence, read N- to C-terminus: F-box/SPRY domain-containing protein 1 (255 aa).

Residues 3-51 enclose the F-box domain; sequence DPVAALCNYNVLEVIFSYLELEDLSHCSQVCKSWYHFLNDENSDVWRWH. One can recognise a B30.2/SPRY domain in the interval 61–253; it reads LKSDLLSSVS…VSMVYLGTPL (193 aa).

The protein belongs to the FBXO45/Fsn family. Component of an E3 ubiquitin ligase complex composed of hiw and Fsn.

It is found in the synapse. Its pathway is protein modification; protein ubiquitination. In terms of biological role, required in the presynaptic motoneuron to down-regulate the levels of wnd and restrain synaptic terminal growth at the neuromuscular junction (NMJ). This is F-box/SPRY domain-containing protein 1 from Drosophila erecta (Fruit fly).